The primary structure comprises 607 residues: Fucose-1-phosphate guanylyltransferase (607 aa).

The disordered stretch occupies residues 1-21 (MRAVRRGLREGGAMAAARDPP).

In terms of tissue distribution, expressed in many tissues.

Its subcellular location is the cytoplasm. It carries out the reaction beta-L-fucose 1-phosphate + GTP + H(+) = GDP-beta-L-fucose + diphosphate. Its function is as follows. Catalyzes the formation of GDP-L-fucose from GTP and L-fucose-1-phosphate. Functions as a salvage pathway to reutilize L-fucose arising from the turnover of glycoproteins and glycolipids. This chain is Fucose-1-phosphate guanylyltransferase, found in Homo sapiens (Human).